Reading from the N-terminus, the 511-residue chain is 2'-acyl-2-O-sulfo-trehalose (hydroxy)phthioceranyltransferase PapA1 (511 aa).

The protein belongs to the PapA acyltransferase family.

The catalysed reaction is a (hydroxy)phthioceranyl-[(hydroxy)phthioceranic acid synthase] + 2'-palmitoyl/stearoyl-2-O-sulfo-alpha,alpha-trehalose = a 3'-(hydroxy)phthioceranyl-2'-palmitoyl/stearoyl-2-O-sulfo-alpha,alpha-trehalose + holo-[(hydroxy)phthioceranic acid synthase].. Functionally, catalyzes the acylation of trehalose-2-sulfate-2'-palmitate (SL659) by adding the (hydroxy)phthioceranoyl group at the 3'-position to yield the diacylated intermediate 2-palmitoyl-3-(C43)-phthioceranyl-alpha, alpha'-D-trehalose-2'-sulfate (SL1278). The protein is 2'-acyl-2-O-sulfo-trehalose (hydroxy)phthioceranyltransferase PapA1 (papA1) of Mycobacterium bovis (strain BCG / Pasteur 1173P2).